Consider the following 197-residue polypeptide: Holliday junction branch migration complex subunit RuvA (197 aa).

A domain I region spans residues 1-64 (MYEYIKGKYI…EDFIGVYGFL (64 aa)). The domain II stretch occupies residues 65 to 144 (TKDELSMFKL…DILEEDDEQI (80 aa)). The tract at residues 145–149 (INKVA) is flexible linker. Positions 149–197 (ADDKKVLEAVAALVTLGYSEKEANKVINSCDKNNSLEQIIKEALKYLMK) are domain III.

It belongs to the RuvA family. Homotetramer. Forms an RuvA(8)-RuvB(12)-Holliday junction (HJ) complex. HJ DNA is sandwiched between 2 RuvA tetramers; dsDNA enters through RuvA and exits via RuvB. An RuvB hexamer assembles on each DNA strand where it exits the tetramer. Each RuvB hexamer is contacted by two RuvA subunits (via domain III) on 2 adjacent RuvB subunits; this complex drives branch migration. In the full resolvosome a probable DNA-RuvA(4)-RuvB(12)-RuvC(2) complex forms which resolves the HJ.

It localises to the cytoplasm. In terms of biological role, the RuvA-RuvB-RuvC complex processes Holliday junction (HJ) DNA during genetic recombination and DNA repair, while the RuvA-RuvB complex plays an important role in the rescue of blocked DNA replication forks via replication fork reversal (RFR). RuvA specifically binds to HJ cruciform DNA, conferring on it an open structure. The RuvB hexamer acts as an ATP-dependent pump, pulling dsDNA into and through the RuvAB complex. HJ branch migration allows RuvC to scan DNA until it finds its consensus sequence, where it cleaves and resolves the cruciform DNA. This is Holliday junction branch migration complex subunit RuvA from Clostridium botulinum (strain ATCC 19397 / Type A).